The chain runs to 413 residues: MLIALELSTIWTIALPPITGAIIGYFTNDIAIKMLFRPYKARYIFKRRLPFTPGLIPRNQERLAKRVSDTIMGSLLTPEEIQNLARRLLKTERVQSAILWLLQLAIKQIRADKEQKTAKILAGILSDLFGQSLPRLLKVLARRDDFLEAQINQIFDRILLEFRLTDLQARQLADWLLDTVISPDILRQLLIDFLTDRNIQVIDEGFREKTSGTYWVVANIFGLRNTLTRLRTFCLDEKETANTRLKELLLSLEMRTRLREWLQNLSLQNLPISTVRQLRKTTRDTVRSYIQQSGAQFLQDFNQSIDWEKLAIVVVNRLQASTVVTDSLEMISQELALILERYLEEDLERIVSQAIPILSIDQIIIEKIVATSPKELEAATEGIVKNELQAIVNLGGILGFFVGTIQTVILLLR.

2 helical membrane passes run 3-23 and 391-411; these read IALE…GAII and IVNL…VILL.

It belongs to the UPF0754 family.

The protein resides in the cell inner membrane. The sequence is that of UPF0754 membrane protein PCC7424_0748 from Gloeothece citriformis (strain PCC 7424) (Cyanothece sp. (strain PCC 7424)).